Here is a 566-residue protein sequence, read N- to C-terminus: ATP-dependent RNA helicase DBP3 (566 aa).

Residues 1–139 (MSAGKKHARD…TTPNGSAQRN (139 aa)) form a disordered region. Over residues 39-58 (DKKKKDKKDKKERKEKKEKK) the composition is skewed to basic residues. Over residues 81-91 (SEPKPEKEKKE) the composition is skewed to basic and acidic residues. The segment covering 92 to 102 (KNNKKDKKDKK) has biased composition (basic residues). Residues 127 to 139 (AATTTPNGSAQRN) show a composition bias toward polar residues. Residues 182–209 (IHFSHLPTSTLTSKKPFASFTAPTPIQA) carry the Q motif motif. The 185-residue stretch at 212–396 (WPFALSGRDV…EGFMIDPVKA (185 aa)) folds into the Helicase ATP-binding domain. ATP is bound at residue 225-232 (AETGSGKT). The DEAD box motif lies at 342 to 345 (DEAD). The region spanning 433–566 (GKEQRLLELL…TEHDKSHSGS (134 aa)) is the Helicase C-terminal domain.

The protein belongs to the DEAD box helicase family. DDX5/DBP2 subfamily.

It is found in the nucleus. Its subcellular location is the nucleolus. The catalysed reaction is ATP + H2O = ADP + phosphate + H(+). In terms of biological role, ATP-dependent RNA helicase required for 60S ribosomal subunit synthesis. Involved in efficient pre-rRNA processing, predominantly at site A3, which is necessary for the normal formation of 25S and 5.8S rRNAs. This is ATP-dependent RNA helicase DBP3 (DBP3) from Chaetomium globosum (strain ATCC 6205 / CBS 148.51 / DSM 1962 / NBRC 6347 / NRRL 1970) (Soil fungus).